The primary structure comprises 460 residues: MMEFDTIAAISTPMGEGAIAIVRLSGPKAVETADRVYRGANRLTDVPTHTIHYGKLVEQTTEQVVDEVMVSVMRAPKTFTREDVVELNCHGGIVAVNRVLELILEQPDVRLAEPGEFTKRAFLNGRIDLSQAEAVMDLIRAKTDRAMTVAVGQIEGRLSKLVQDLREQLLQTIASIEVNIDYPEYDAEEMTQQIVQKDAGEVRRILTELLATARQGKILREGLSTAIIGRPNVGKSSLLNTLVQEAKAIVTDIAGTTRDTIEEYVNVRGVPLKLIDTAGIRETEDIVERMGVEKSRQALNSADLILLVLNGNDALTEEDVLLFEAIRGMNAIIIVNKSDLTQAIDLTRVSELADGRPVVTTSLLEEAGVTDLEAAIASLFFEQGVEGQDMTYVSNARHIQLIKQASQMIEDALGAAEASMPIDMVQIDLRRAWDTLGEINGDTAQDSLLDKLFSQFCLGK.

(6S)-5-formyl-5,6,7,8-tetrahydrofolate is bound by residues Arg23, Glu86, and Arg126. A TrmE-type G domain is found at 222-381 (GLSTAIIGRP…LEAAIASLFF (160 aa)). Asn232 contributes to the K(+) binding site. GTP-binding positions include 232-237 (NVGKSS), 251-257 (TDIAGTT), and 276-279 (DTAG). Position 236 (Ser236) interacts with Mg(2+). K(+) contacts are provided by Thr251, Ile253, and Thr256. Thr257 contacts Mg(2+). Lys460 is a (6S)-5-formyl-5,6,7,8-tetrahydrofolate binding site.

The protein belongs to the TRAFAC class TrmE-Era-EngA-EngB-Septin-like GTPase superfamily. TrmE GTPase family. As to quaternary structure, homodimer. Heterotetramer of two MnmE and two MnmG subunits. It depends on K(+) as a cofactor.

Its subcellular location is the cytoplasm. In terms of biological role, exhibits a very high intrinsic GTPase hydrolysis rate. Involved in the addition of a carboxymethylaminomethyl (cmnm) group at the wobble position (U34) of certain tRNAs, forming tRNA-cmnm(5)s(2)U34. This Exiguobacterium sibiricum (strain DSM 17290 / CCUG 55495 / CIP 109462 / JCM 13490 / 255-15) protein is tRNA modification GTPase MnmE.